A 258-amino-acid chain; its full sequence is Small ribosomal subunit protein mS23 (258 aa).

A compositionally biased stretch (polar residues) spans 230-239 (KKNSTKQSWA). The tract at residues 230–258 (KKNSTKQSWAEATEEKEEQDSAEPEELKL) is disordered. A compositionally biased stretch (acidic residues) spans 241–258 (ATEEKEEQDSAEPEELKL).

Belongs to the mitochondrion-specific ribosomal protein mS23 family. As to quaternary structure, component of the mitochondrial small ribosomal subunit.

The protein localises to the mitochondrion. In Eremothecium gossypii (strain ATCC 10895 / CBS 109.51 / FGSC 9923 / NRRL Y-1056) (Yeast), this protein is Small ribosomal subunit protein mS23 (RSM25).